Reading from the N-terminus, the 150-residue chain is 3-hydroxyacyl-[acyl-carrier-protein] dehydratase FabZ (150 aa).

Residue H54 is part of the active site.

It belongs to the thioester dehydratase family. FabZ subfamily.

It is found in the cytoplasm. The catalysed reaction is a (3R)-hydroxyacyl-[ACP] = a (2E)-enoyl-[ACP] + H2O. Involved in unsaturated fatty acids biosynthesis. Catalyzes the dehydration of short chain beta-hydroxyacyl-ACPs and long chain saturated and unsaturated beta-hydroxyacyl-ACPs. The polypeptide is 3-hydroxyacyl-[acyl-carrier-protein] dehydratase FabZ (Vibrio atlanticus (strain LGP32) (Vibrio splendidus (strain Mel32))).